Here is a 499-residue protein sequence, read N- to C-terminus: Bifunctional purine biosynthesis protein PurH (499 aa).

The region spanning 1–144 (MIKRALISVF…KNFKDVVVLT (144 aa)) is the MGS-like domain.

This sequence belongs to the PurH family.

The catalysed reaction is (6R)-10-formyltetrahydrofolate + 5-amino-1-(5-phospho-beta-D-ribosyl)imidazole-4-carboxamide = 5-formamido-1-(5-phospho-D-ribosyl)imidazole-4-carboxamide + (6S)-5,6,7,8-tetrahydrofolate. It carries out the reaction IMP + H2O = 5-formamido-1-(5-phospho-D-ribosyl)imidazole-4-carboxamide. Its pathway is purine metabolism; IMP biosynthesis via de novo pathway; 5-formamido-1-(5-phospho-D-ribosyl)imidazole-4-carboxamide from 5-amino-1-(5-phospho-D-ribosyl)imidazole-4-carboxamide (10-formyl THF route): step 1/1. The protein operates within purine metabolism; IMP biosynthesis via de novo pathway; IMP from 5-formamido-1-(5-phospho-D-ribosyl)imidazole-4-carboxamide: step 1/1. The sequence is that of Bifunctional purine biosynthesis protein PurH from Clostridium botulinum (strain Loch Maree / Type A3).